Here is a 140-residue protein sequence, read N- to C-terminus: Large ribosomal subunit protein bL17 (140 aa).

The tract at residues 119-140 (DTTAKGQDSGPVQVEEQENEEA) is disordered.

This sequence belongs to the bacterial ribosomal protein bL17 family. Part of the 50S ribosomal subunit. Contacts protein L32.

This chain is Large ribosomal subunit protein bL17, found in Zymomonas mobilis subsp. mobilis (strain ATCC 31821 / ZM4 / CP4).